Reading from the N-terminus, the 157-residue chain is Tuberoinfundibular peptide of 39 residues (157 aa).

Positions M1–A25 are cleaved as a signal peptide. The propeptide occupies F26–Q116.

The protein belongs to the parathyroid hormone family.

Its subcellular location is the secreted. Its function is as follows. Plays a role as a potent and selective agonist of pth2r resulting in adenyl cyclase activation and intracellular calcium level elevation. This Danio rerio (Zebrafish) protein is Tuberoinfundibular peptide of 39 residues.